The following is a 259-amino-acid chain: Ribonuclease HII (259 aa).

Positions 70–258 constitute an RNase H type-2 domain; it reads TLIAGIDEVG…VKSLVLGKKE (189 aa). Asp76, Glu77, and Asp168 together coordinate a divalent metal cation.

This sequence belongs to the RNase HII family. Mn(2+) serves as cofactor. The cofactor is Mg(2+).

The protein localises to the cytoplasm. It carries out the reaction Endonucleolytic cleavage to 5'-phosphomonoester.. Functionally, endonuclease that specifically degrades the RNA of RNA-DNA hybrids. This Streptococcus pneumoniae serotype 4 (strain ATCC BAA-334 / TIGR4) protein is Ribonuclease HII.